A 136-amino-acid chain; its full sequence is Small ribosomal subunit protein uS8 (136 aa).

It belongs to the universal ribosomal protein uS8 family. In terms of assembly, part of the 30S ribosomal subunit. Contacts proteins S5 and S12.

Functionally, one of the primary rRNA binding proteins, it binds directly to 16S rRNA central domain where it helps coordinate assembly of the platform of the 30S subunit. The sequence is that of Small ribosomal subunit protein uS8 from Sulfurihydrogenibium sp. (strain YO3AOP1).